Reading from the N-terminus, the 132-residue chain is MKKEVILNSELAKIADDLGHTDQVCIGDLGLPVPSGVKKIDLALTRGKPTFQEVLDIYLENILVEKIYLADEIKENNPEQLKILLTKLSADVEVVFVSHETLKLMNHDVKAVVRTGENTPYSNIILQSGVAL.

His20 (proton donor) is an active-site residue. Substrate is bound by residues Asp28, His99, and 121–123 (YSN).

This sequence belongs to the RbsD / FucU family. RbsD subfamily. In terms of assembly, homodecamer.

Its subcellular location is the cytoplasm. The catalysed reaction is beta-D-ribopyranose = beta-D-ribofuranose. The protein operates within carbohydrate metabolism; D-ribose degradation; D-ribose 5-phosphate from beta-D-ribopyranose: step 1/2. Functionally, catalyzes the interconversion of beta-pyran and beta-furan forms of D-ribose. This is D-ribose pyranase from Lactococcus lactis subsp. cremoris (strain SK11).